The sequence spans 896 residues: MTEESEETVLYIEHRYVCSECNQLYGSLEEVLMHQNSHVPQQHFELVGVADPGVTVATDTASGTGLYQTLVQESQYQCLECGQLLMSPSQLLEHQELHLKMMTPQEAVPAEPPPKAPPLSSSTIHYECVDCKALFASQELWLNHRQTHLRATPTKAPAPVVLGSPVVPGPPVGQARVAVEHSYRKAEEGGEGATVPSAAATTTEVVTEVELLLYKCSECSQLFQLPADFLEHQATHFPAPVPESQEPALQQEVQASSPAEVPVSQPDPVPASDHSYELRNGEAIGRDRRGRRARRNNSGEAGGAATQELFCSACDQLFLSPHQLQQHLRSHREGVFKCPLCSRVFPSPSSLDQHLGDHSSESHFLCVDCGLAFGTEALLLAHRRAHTPNPLHSCPCGKTFVNLTKFLYHRRTHGVGGVPLPTTPVPPEEPVIGFPEPAPAETGEPEAPEPPVSEETSAGPAAPGTYRCLLCSREFGKALQLTRHQRFVHRLERRHKCSICGKMFKKKSHVRNHLRTHTGERPFPCPDCSKPFNSPANLARHRLTHTGERPYRCGDCGKAFTQSSTLRQHRLVHAQHFPYRCQECGVRFHRPYRLLMHRYHHTGEYPYKCRECPRSFLLRRLLEVHQLVVHAGRQPHRCPSCGAAFPSSLRLREHRCAAAAAQAPRRFECGTCGKKVGSAARLQAHEAAHAAAGPGEVLAKEPPAPRAPRATRAPVASPAGLGGTATASPAAPARRRGLECSECKKLFSTETSLQVHRRIHTGERPYPCPDCGKAFRQSTHLKDHRRLHTGERPFACEVCGKAFAISMRLAEHRRIHTGERPYSCPDCGKSYRSFSNLWKHRKTHQQQHQAAVRQQLAEAEAAVGLAVMETAVEALPLVEAIEIYPLAEAEGVQISG.

3 C2H2-type zinc fingers span residues 16–38 (YVCS…QNSH), 76–98 (YQCL…QELH), and 126–148 (YECV…RQTH). S164 is subject to Phosphoserine. The C2H2-type 4 zinc-finger motif lies at 214-236 (YKCSECSQLFQLPADFLEHQATH). The tract at residues 239–301 (APVPESQEPA…RARRNNSGEA (63 aa)) is disordered. Over residues 247 to 257 (PALQQEVQASS) the composition is skewed to polar residues. A compositionally biased stretch (basic and acidic residues) spans 274 to 287 (HSYELRNGEAIGRD). S298 carries the post-translational modification Phosphoserine. 4 consecutive C2H2-type zinc fingers follow at residues 309–331 (LFCS…LRSH), 336–358 (FKCP…LGDH), 364–386 (FLCV…RRAH), and 392–413 (HSCP…RRTH). The interval 434–460 (FPEPAPAETGEPEAPEPPVSEETSAGP) is disordered. C2H2-type zinc fingers lie at residues 466–489 (YRCL…RFVH), 495–517 (HKCS…LRTH), 523–545 (FPCP…RLTH), 551–573 (YRCG…RLVH), 579–601 (YRCQ…RYHH), and 607–630 (YKCR…LVVH). Residues 636-659 (HRCPSCGAAFPSSLRLREHRCAAA) form a C2H2-type 15; degenerate zinc finger. Residues 667-689 (FECGTCGKKVGSAARLQAHEAAH) form a C2H2-type 16 zinc finger. Positions 687–733 (AAHAAAGPGEVLAKEPPAPRAPRATRAPVASPAGLGGTATASPAAPA) are disordered. Residues 707–732 (APRATRAPVASPAGLGGTATASPAAP) show a composition bias toward low complexity. Residue S717 is modified to Phosphoserine. T724 carries the post-translational modification Phosphothreonine. S728 is subject to Phosphoserine. 4 C2H2-type zinc fingers span residues 738-760 (LECS…RRIH), 766-788 (YPCP…RRLH), 794-816 (FACE…RRIH), and 822-844 (YSCP…RKTH). R832 bears the Asymmetric dimethylarginine mark.

This sequence belongs to the krueppel C2H2-type zinc-finger protein family.

The protein resides in the nucleus. May be involved in transcriptional regulation. This chain is Zinc finger protein 574 (ZNF574), found in Macaca fascicularis (Crab-eating macaque).